Reading from the N-terminus, the 417-residue chain is Leucine-rich repeat-containing protein 42 (417 aa).

LRR repeat units lie at residues 167–188, 195–215, 227–248, and 252–273; these read CLHSLDLSCCKLGDEHELLAHL, SLTELYLKDNCLSNIGIQKMT, KLKVLDLSSNPGITDRGVCFLF, and LLKFLDLSDTSIQDPSGTLKKI. The tract at residues 360 to 390 is disordered; that stretch reads FFRPKEQKDPDSSNSEKRRHSTKRTGADCVQ. Over residues 362–375 the composition is skewed to basic and acidic residues; the sequence is RPKEQKDPDSSNSE.

It belongs to the LRRC42 family.

This Xenopus laevis (African clawed frog) protein is Leucine-rich repeat-containing protein 42 (lrrc42).